The following is a 428-amino-acid chain: L-lysine N6-monooxygenase MbtG (428 aa).

The first 20 residues, 1–20 (MSTLAILGAGAKAVAVAAKA), serve as a signal peptide directing secretion.

Belongs to the lysine N(6)-hydroxylase/L-ornithine N(5)-oxygenase family. It depends on FAD as a cofactor.

The catalysed reaction is L-lysine + NADPH + O2 = N(6)-hydroxy-L-lysine + NADP(+) + H2O. The protein operates within siderophore biosynthesis; mycobactin biosynthesis. Flavoprotein monooxygenase required for N-hydroxylation of the two acylated lysine residues during mycobactin assembly, thus producing the hydroxamate groups necessary for iron sequestration. Is also able, but less efficiently, to hydroxylate L-lysine (non acylated) in vitro. The protein is L-lysine N6-monooxygenase MbtG (mbtG) of Mycolicibacterium paratuberculosis (strain ATCC BAA-968 / K-10) (Mycobacterium paratuberculosis).